Reading from the N-terminus, the 345-residue chain is Protein RecA (345 aa).

65 to 72 serves as a coordination point for ATP; that stretch reads GPESSGKT.

Belongs to the RecA family.

The protein localises to the cytoplasm. Functionally, can catalyze the hydrolysis of ATP in the presence of single-stranded DNA, the ATP-dependent uptake of single-stranded DNA by duplex DNA, and the ATP-dependent hybridization of homologous single-stranded DNAs. It interacts with LexA causing its activation and leading to its autocatalytic cleavage. This chain is Protein RecA, found in Hahella chejuensis (strain KCTC 2396).